Reading from the N-terminus, the 219-residue chain is MNETAKKLLVTGATELGLHLTSAQLGNFYTYASELTKWSKKINLTAIKTDEEIALKHFVDSLTLAKVVKNKGRLLDIGSGGGFPAIPLKIVLHDLHVMSVDAVEKKVIFQRHVARLLHLHDFEAVHVRGEELAKSHAGQFDWIVSRAFSDIPTFAAMTLPLLKSDGRLIAMKGRGGRDEAEAAKGALDDLGARIAELLEFRLPVSGDSRYLVVMEKVAD.

S-adenosyl-L-methionine-binding positions include G78, F83, 129 to 130 (GE), and R146.

The protein belongs to the methyltransferase superfamily. RNA methyltransferase RsmG family.

The protein resides in the cytoplasm. It catalyses the reaction guanosine(527) in 16S rRNA + S-adenosyl-L-methionine = N(7)-methylguanosine(527) in 16S rRNA + S-adenosyl-L-homocysteine. Functionally, specifically methylates the N7 position of guanine in position 527 of 16S rRNA. This chain is Ribosomal RNA small subunit methyltransferase G, found in Geotalea uraniireducens (strain Rf4) (Geobacter uraniireducens).